A 22-amino-acid chain; its full sequence is SGGGKEAAETFNRVESHPRPDA.

Positions 1–22 (SGGGKEAAETFNRVESHPRPDA) are disordered.

Inhibits insect alpha-amylases. This chain is Alpha-amylase inhibitor DR4, found in Delonix regia (Royal poinciana).